The following is a 185-amino-acid chain: Acireductone dioxygenase (185 aa).

Residues 1-22 (MSRLSIHPEGSTNATSPAEPLL) form a disordered region. The Fe(2+) site is built by histidine 102, histidine 104, glutamate 108, and histidine 146. Positions 102, 104, 108, and 146 each coordinate Ni(2+).

This sequence belongs to the acireductone dioxygenase (ARD) family. As to quaternary structure, monomer. The cofactor is Fe(2+). It depends on Ni(2+) as a cofactor.

It catalyses the reaction 1,2-dihydroxy-5-(methylsulfanyl)pent-1-en-3-one + O2 = 3-(methylsulfanyl)propanoate + CO + formate + 2 H(+). It carries out the reaction 1,2-dihydroxy-5-(methylsulfanyl)pent-1-en-3-one + O2 = 4-methylsulfanyl-2-oxobutanoate + formate + 2 H(+). The protein operates within amino-acid biosynthesis; L-methionine biosynthesis via salvage pathway; L-methionine from S-methyl-5-thio-alpha-D-ribose 1-phosphate: step 5/6. Functionally, catalyzes 2 different reactions between oxygen and the acireductone 1,2-dihydroxy-3-keto-5-methylthiopentene (DHK-MTPene) depending upon the metal bound in the active site. Fe-containing acireductone dioxygenase (Fe-ARD) produces formate and 2-keto-4-methylthiobutyrate (KMTB), the alpha-ketoacid precursor of methionine in the methionine recycle pathway. Ni-containing acireductone dioxygenase (Ni-ARD) produces methylthiopropionate, carbon monoxide and formate, and does not lie on the methionine recycle pathway. The chain is Acireductone dioxygenase from Prochlorococcus marinus (strain MIT 9313).